The sequence spans 309 residues: Pyridoxal 5'-phosphate synthase subunit PDX1.1 (309 aa).

At Met1 the chain carries N-acetylmethionine. Asp41 is a binding site for D-ribose 5-phosphate. Catalysis depends on Lys98, which acts as the Schiff-base intermediate with D-ribose 5-phosphate. Residue Gly170 participates in D-ribose 5-phosphate binding. Arg182 is a binding site for D-glyceraldehyde 3-phosphate. D-ribose 5-phosphate is bound by residues Gly231 and 252 to 253 (GS).

Belongs to the PdxS/SNZ family. In terms of assembly, homodimer or heterodimer with PDX1.2 or PDX1.3. Interacts with PDX2. Expressed in flowers, shoots, leaves and weakly in roots.

The protein resides in the cytoplasm. It carries out the reaction aldehydo-D-ribose 5-phosphate + D-glyceraldehyde 3-phosphate + L-glutamine = pyridoxal 5'-phosphate + L-glutamate + phosphate + 3 H2O + H(+). Its pathway is cofactor biosynthesis; pyridoxal 5'-phosphate biosynthesis. Its function is as follows. Catalyzes the formation of pyridoxal 5'-phosphate from ribose 5-phosphate (RBP), glyceraldehyde 3-phosphate (G3P) and ammonia. The ammonia is provided by PDX2. Can also use ribulose 5-phosphate and dihydroxyacetone phosphate as substrates, resulting from enzyme-catalyzed isomerization of RBP and G3P, respectively. Also plays an indirect role in resistance to singlet oxygen-generating photosensitizers. The chain is Pyridoxal 5'-phosphate synthase subunit PDX1.1 (PDX11) from Arabidopsis thaliana (Mouse-ear cress).